Reading from the N-terminus, the 131-residue chain is Large ribosomal subunit protein bL12 (131 aa).

The protein belongs to the bacterial ribosomal protein bL12 family. As to quaternary structure, homodimer. Part of the ribosomal stalk of the 50S ribosomal subunit. Forms a multimeric L10(L12)X complex, where L10 forms an elongated spine to which 2 to 4 L12 dimers bind in a sequential fashion. Binds GTP-bound translation factors.

Functionally, forms part of the ribosomal stalk which helps the ribosome interact with GTP-bound translation factors. Is thus essential for accurate translation. The chain is Large ribosomal subunit protein bL12 from Nocardioides sp. (strain ATCC BAA-499 / JS614).